Consider the following 200-residue polypeptide: LexA repressor (200 aa).

Residues 29–48 constitute a DNA-binding region (H-T-H motif); that stretch reads IRDIARAFRITPRGAIVHLN. Residues serine 120 and lysine 158 each act as for autocatalytic cleavage activity in the active site.

The protein belongs to the peptidase S24 family. Homodimer.

The enzyme catalyses Hydrolysis of Ala-|-Gly bond in repressor LexA.. Its function is as follows. Represses a number of genes involved in the response to DNA damage (SOS response), including recA and lexA. In the presence of single-stranded DNA, RecA interacts with LexA causing an autocatalytic cleavage which disrupts the DNA-binding part of LexA, leading to derepression of the SOS regulon and eventually DNA repair. This Pseudothermotoga lettingae (strain ATCC BAA-301 / DSM 14385 / NBRC 107922 / TMO) (Thermotoga lettingae) protein is LexA repressor.